Consider the following 263-residue polypeptide: Elongation factor Ts (263 aa).

Residues 82-85 are involved in Mg(2+) ion dislocation from EF-Tu; sequence TDFV. Residues 221–251 show a composition bias toward low complexity; it reads APPAVVEAPVAETPEPAVAETPEAKPAATES. Positions 221–263 are disordered; the sequence is APPAVVEAPVAETPEPAVAETPEAKPAATESKPAKSKSAKKKK. The span at 254-263 shows a compositional bias: basic residues; it reads AKSKSAKKKK.

Belongs to the EF-Ts family.

The protein localises to the cytoplasm. Its function is as follows. Associates with the EF-Tu.GDP complex and induces the exchange of GDP to GTP. It remains bound to the aminoacyl-tRNA.EF-Tu.GTP complex up to the GTP hydrolysis stage on the ribosome. The chain is Elongation factor Ts from Cyanothece sp. (strain PCC 7425 / ATCC 29141).